The chain runs to 577 residues: Arginine--tRNA ligase (577 aa).

A 'HIGH' region motif is present at residues 122 to 132 (PNVAKEMHVGH).

This sequence belongs to the class-I aminoacyl-tRNA synthetase family. Monomer.

The protein localises to the cytoplasm. It carries out the reaction tRNA(Arg) + L-arginine + ATP = L-arginyl-tRNA(Arg) + AMP + diphosphate. The polypeptide is Arginine--tRNA ligase (Salmonella arizonae (strain ATCC BAA-731 / CDC346-86 / RSK2980)).